The chain runs to 138 residues: MAEEQQNRLQNAIDTMVKSLERDNIRKMQGKMFRCSAQCCEDNGASMQQVHHCIERCHTPLAQAQSLVTNELERFQNRLARCTMHCNDKAKDSFDSGSKEAQVKAQLEGCVIKCAEEHMNLIPSMTKKLKDALAQADK.

The protein belongs to the FAM136 family.

In Xenopus tropicalis (Western clawed frog), this protein is Protein FAM136A (fam136a).